Consider the following 166-residue polypeptide: Nucleotide-binding protein Dred_1927 (166 aa).

This sequence belongs to the YajQ family.

Functionally, nucleotide-binding protein. This chain is Nucleotide-binding protein Dred_1927, found in Desulforamulus reducens (strain ATCC BAA-1160 / DSM 100696 / MI-1) (Desulfotomaculum reducens).